A 604-amino-acid polypeptide reads, in one-letter code: FAD-linked oxidoreductase easE (604 aa).

The N-terminal stretch at Met-1–Ser-25 is a signal peptide. 4 N-linked (GlcNAc...) asparagine glycosylation sites follow: Asn-47, Asn-70, Asn-106, and Asn-196. Residues Gln-125–Asp-308 form the FAD-binding PCMH-type domain.

It belongs to the oxygen-dependent FAD-linked oxidoreductase family. The cofactor is FAD.

The protein operates within alkaloid biosynthesis; ergot alkaloid biosynthesis. Its function is as follows. FAD-linked oxidoreductase; part of the gene cluster that mediates the biosynthesis of fungal ergot alkaloid. DmaW catalyzes the first step of ergot alkaloid biosynthesis by condensing dimethylallyl diphosphate (DMAP) and tryptophan to form 4-dimethylallyl-L-tryptophan. The second step is catalyzed by the methyltransferase easF that methylates 4-dimethylallyl-L-tryptophan in the presence of S-adenosyl-L-methionine, resulting in the formation of 4-dimethylallyl-L-abrine. The catalase easC and the FAD-dependent oxidoreductase easE then transform 4-dimethylallyl-L-abrine to chanoclavine-I which is further oxidized by easD in the presence of NAD(+), resulting in the formation of chanoclavine-I aldehyde. Chanoclavine-I aldehyde is the precursor of ergoamides and ergopeptines in Clavicipitaceae, and clavine-type alcaloids such as fumiclavine in Trichocomaceae. However, the metabolites downstream of chanoclavine-I aldehyde in Arthrodermataceae have not been identified yet. The polypeptide is FAD-linked oxidoreductase easE (Trichophyton verrucosum (strain HKI 0517)).